The sequence spans 64 residues: Conotoxin Leo-T1 (64 aa).

Positions 1 to 22 are cleaved as a signal peptide; the sequence is MRCLPVFIILLLLIPSAPSVDA. A propeptide spanning residues 23 to 48 is cleaved from the precursor; it reads QPKTEDDVPLASLHDNAKLTLQGLWD.

The protein belongs to the conotoxin T superfamily. In terms of processing, contains 2 disulfide bonds that can be either 'C1-C3, C2-C4' or 'C1-C4, C2-C3', since these disulfide connectivities have been observed for conotoxins with cysteine framework V (for examples, see AC P0DQQ7 and AC P81755). In terms of tissue distribution, expressed by the venom duct.

It is found in the secreted. This is Conotoxin Leo-T1 from Conus leopardus (Leopard cone).